The primary structure comprises 209 residues: Putative AgrB-like protein (209 aa).

Helical transmembrane passes span 49–71, 82–102, 105–125, 149–169, and 173–193; these read ILFL…AAFG, AKNS…GAYL, YLLF…LLLF, QAVL…DELI, and ISLS…KVLG.

The protein belongs to the AgrB family.

The protein localises to the cell membrane. In terms of biological role, may be involved in the proteolytic processing of a quorum sensing system signal molecule precursor. This Clostridium acetobutylicum (strain ATCC 824 / DSM 792 / JCM 1419 / IAM 19013 / LMG 5710 / NBRC 13948 / NRRL B-527 / VKM B-1787 / 2291 / W) protein is Putative AgrB-like protein.